A 174-amino-acid chain; its full sequence is RNA pyrophosphohydrolase (174 aa).

The Nudix hydrolase domain occupies 14–167 (PYRPCVGLMV…KRKVYEEVVA (154 aa)). The short motif at 55–76 (GGIDKGEEPLEAAIRELYEETG) is the Nudix box element.

It belongs to the Nudix hydrolase family. RppH subfamily. It depends on a divalent metal cation as a cofactor.

Accelerates the degradation of transcripts by removing pyrophosphate from the 5'-end of triphosphorylated RNA, leading to a more labile monophosphorylated state that can stimulate subsequent ribonuclease cleavage. The protein is RNA pyrophosphohydrolase of Brucella anthropi (strain ATCC 49188 / DSM 6882 / CCUG 24695 / JCM 21032 / LMG 3331 / NBRC 15819 / NCTC 12168 / Alc 37) (Ochrobactrum anthropi).